We begin with the raw amino-acid sequence, 286 residues long: Pantothenate synthetase (286 aa).

Residue 30 to 37 participates in ATP binding; the sequence is MGNLHDGH. The active-site Proton donor is the His-37. Gln-61 lines the (R)-pantoate pocket. Residue Gln-61 coordinates beta-alanine. 148-151 contacts ATP; that stretch reads GKKD. Gln-154 is a binding site for (R)-pantoate. Residues Val-177 and 185–188 each bind ATP; that span reads LSSR.

Belongs to the pantothenate synthetase family. Homodimer.

It is found in the cytoplasm. It catalyses the reaction (R)-pantoate + beta-alanine + ATP = (R)-pantothenate + AMP + diphosphate + H(+). The protein operates within cofactor biosynthesis; (R)-pantothenate biosynthesis; (R)-pantothenate from (R)-pantoate and beta-alanine: step 1/1. Its function is as follows. Catalyzes the condensation of pantoate with beta-alanine in an ATP-dependent reaction via a pantoyl-adenylate intermediate. This Psychrobacter sp. (strain PRwf-1) protein is Pantothenate synthetase.